Here is a 243-residue protein sequence, read N- to C-terminus: Carboxy-S-adenosyl-L-methionine synthase (243 aa).

S-adenosyl-L-methionine is bound by residues Y40, 65 to 67, 90 to 91, 118 to 119, N133, and R200; these read GCS, DN, and DI.

Belongs to the class I-like SAM-binding methyltransferase superfamily. Cx-SAM synthase family. As to quaternary structure, homodimer.

It carries out the reaction prephenate + S-adenosyl-L-methionine = carboxy-S-adenosyl-L-methionine + 3-phenylpyruvate + H2O. Functionally, catalyzes the conversion of S-adenosyl-L-methionine (SAM) to carboxy-S-adenosyl-L-methionine (Cx-SAM). This Shewanella loihica (strain ATCC BAA-1088 / PV-4) protein is Carboxy-S-adenosyl-L-methionine synthase.